A 745-amino-acid polypeptide reads, in one-letter code: Immunoglobulin superfamily containing leucine-rich repeat protein 2 (745 aa).

Positions Met1–Ala19 are cleaved as a signal peptide. In terms of domain architecture, LRRNT spans Cys20–Ala51. The Extracellular segment spans residues Cys20–Ser589. N-linked (GlcNAc...) asparagine glycosylation is found at Asn52 and Asn73. 5 LRR repeats span residues Asn52–Asn73, Gln76–Val97, Gln100–Ser123, Ala124–Ala145, and Asp148–Ala169. Asn121 carries N-linked (GlcNAc...) asparagine glycosylation. The region spanning Asn181–Pro232 is the LRRCT domain. The Ig-like domain occupies Pro233–Thr372. An intrachain disulfide couples Cys260 to Cys356. The span at Lys290–Asp300 shows a compositional bias: basic and acidic residues. The disordered stretch occupies residues Lys290–Pro328. Over residues Thr317–Pro328 the composition is skewed to pro residues. N-linked (GlcNAc...) asparagine glycosylation is found at Asn338 and Asn365. The interval Ala376–Leu423 is disordered. 2 N-linked (GlcNAc...) asparagine glycosylation sites follow: Asn474 and Asn563. A helical transmembrane segment spans residues Leu590–Gly610. Over Ala611 to Gly745 the chain is Cytoplasmic. The interval Ser654–Ala697 is disordered. Over residues Gly665–Gln683 the composition is skewed to acidic residues. Tyr719 carries the phosphotyrosine modification. Ser720 is subject to Phosphoserine.

In terms of assembly, homomultimer. Interacts with NTRK1/TrkA. At 11.5 dpc, expressed in spinal nerves, their roots and the ventral spinal cord. At 12.5 dpc, detected in the ventral spinal cord, dorsal root ganglia (DRG), dorsal and ventral roots and sympathetic chain ganglia. At 12.5 dpc, expressed in almost all motor neurons which also express RET and in almost all DRG sensory neurons which also express NTRK1. At 18.5 dpc, expressed only in a subset of NTRK1-expressing neurons but still expressed in nearly all RET-expressing neurons.

The protein resides in the cell membrane. Functionally, required for axon extension during neural development. This Mus musculus (Mouse) protein is Immunoglobulin superfamily containing leucine-rich repeat protein 2 (Islr2).